The sequence spans 1490 residues: DNA-directed RNA polymerase subunit beta' (1490 aa).

4 residues coordinate Zn(2+): Cys67, Cys69, Cys82, and Cys85. Mg(2+) is bound by residues Asp499, Asp501, and Asp503. Positions 868, 944, 951, and 954 each coordinate Zn(2+).

It belongs to the RNA polymerase beta' chain family. In terms of assembly, the RNAP catalytic core consists of 2 alpha, 1 beta, 1 beta' and 1 omega subunit. When a sigma factor is associated with the core the holoenzyme is formed, which can initiate transcription. Mg(2+) is required as a cofactor. It depends on Zn(2+) as a cofactor.

The catalysed reaction is RNA(n) + a ribonucleoside 5'-triphosphate = RNA(n+1) + diphosphate. In terms of biological role, DNA-dependent RNA polymerase catalyzes the transcription of DNA into RNA using the four ribonucleoside triphosphates as substrates. This is DNA-directed RNA polymerase subunit beta' from Chlorobaculum tepidum (strain ATCC 49652 / DSM 12025 / NBRC 103806 / TLS) (Chlorobium tepidum).